The primary structure comprises 138 residues: ATP synthase epsilon chain (138 aa).

It belongs to the ATPase epsilon chain family. As to quaternary structure, F-type ATPases have 2 components, CF(1) - the catalytic core - and CF(0) - the membrane proton channel. CF(1) has five subunits: alpha(3), beta(3), gamma(1), delta(1), epsilon(1). CF(0) has three main subunits: a, b and c.

It localises to the cell membrane. In terms of biological role, produces ATP from ADP in the presence of a proton gradient across the membrane. This chain is ATP synthase epsilon chain, found in Polynucleobacter asymbioticus (strain DSM 18221 / CIP 109841 / QLW-P1DMWA-1) (Polynucleobacter necessarius subsp. asymbioticus).